The following is a 30-amino-acid chain: Mycofactocin precursor peptide (30 aa).

This sequence belongs to the mycofactocin precursor peptide family. In terms of assembly, interacts with MftB. The post-translational modifications that lead to mycofactocin involve oxidative decarboxylation of the C-terminal tyrosine residue catalyzed by MftC, introduction of a tyramine-valine cross-link, removal of the modified C-terminal dipeptide by MftE. The released dipeptide then undergoes oxidative deamination by MftD, glycosylation by MftF and methylation by an unknown enzyme.

Its function is as follows. Precursor peptide that leads to mycofactocin (MFT) after extensive post-translational modifications by enzymes encoded by adjacent genes. Mycofactocin acts as a redox cofactor of nicotinamide-dependent oxidoreductases encoded in the same locus. The chain is Mycofactocin precursor peptide from Mycobacterium ulcerans (strain Agy99).